The primary structure comprises 673 residues: DNA ligase (673 aa).

NAD(+)-binding positions include 32–36 (DHVYD), 81–82 (SL), and Glu111. Lys113 (N6-AMP-lysine intermediate) is an active-site residue. NAD(+)-binding residues include Arg134, Glu171, Lys286, and Lys310. Cys404, Cys407, Cys422, and Cys428 together coordinate Zn(2+). The region spanning 595 to 673 (NIIDEYKNKT…NEFWKKDNNF (79 aa)) is the BRCT domain.

Belongs to the NAD-dependent DNA ligase family. LigA subfamily. It depends on Mg(2+) as a cofactor. Mn(2+) serves as cofactor.

The catalysed reaction is NAD(+) + (deoxyribonucleotide)n-3'-hydroxyl + 5'-phospho-(deoxyribonucleotide)m = (deoxyribonucleotide)n+m + AMP + beta-nicotinamide D-nucleotide.. DNA ligase that catalyzes the formation of phosphodiester linkages between 5'-phosphoryl and 3'-hydroxyl groups in double-stranded DNA using NAD as a coenzyme and as the energy source for the reaction. It is essential for DNA replication and repair of damaged DNA. This is DNA ligase from Ureaplasma parvum serovar 3 (strain ATCC 27815 / 27 / NCTC 11736).